The following is a 194-amino-acid chain: Putative manganese efflux pump MntP (194 aa).

6 consecutive transmembrane segments (helical) span residues 3-23 (PITILLIGIAMSTDAFAAAIG), 37-57 (LYVAVIFGVIETATPIAGWLL), 65-85 (IATFDHWIAFGLLSGLGIHMI), 112-132 (LAATALATSIDAAAIGISLAF), 139-159 (IVAAVIGLCTFTMVIFGVMLG), and 170-190 (AEIVGGIILIIVGSTILYEHL).

The protein belongs to the MntP (TC 9.B.29) family.

It is found in the cell inner membrane. Probably functions as a manganese efflux pump. This is Putative manganese efflux pump MntP from Xylella fastidiosa (strain 9a5c).